The chain runs to 371 residues: Assembly protein G7 (371 aa).

This sequence belongs to the chordopoxvirinae G7 family. In terms of assembly, part of a complex composed of A30, G7, F10 kinase, A15, D2, D3, and J1. Post-translationally, phosphorylated on serines by F10 kinase, phosphorylation state is regulated by H1 phosphatase. Undergoes proteolytic processing during morphogenesis, probably required for the transformation of immature virions (IV) into mature virions (MV).

It is found in the host cytoplasm. It localises to the virion. Late protein which is a part of a large complex required for early virion morphogenesis. This complex participates in the formation of virosomes and the incorporation of virosomal contents into nascent immature virions. The sequence is that of Assembly protein G7 from Variola virus (isolate Human/India/Ind3/1967) (VARV).